Reading from the N-terminus, the 219-residue chain is Dynein light chain Tctex-type 4 (219 aa).

Residues 1-84 (MAGRPVPAGR…RRPSLGPVPP (84 aa)) form a disordered region. Basic and acidic residues predominate over residues 10-20 (RQEEELAKDPG). Ser64 carries the post-translational modification Phosphoserine.

It belongs to the dynein light chain Tctex-type family. Interacts with ENG/endoglin, TGFBR2 and TGFBR3. Interacts with PPP1CC.

It localises to the cell projection. The protein localises to the cilium. Its subcellular location is the flagellum. The protein resides in the cytoplasmic vesicle. It is found in the secretory vesicle. It localises to the acrosome. The protein localises to the cytoplasm. Its subcellular location is the cytoskeleton. The protein resides in the cilium axoneme. It is found in the nucleus. It localises to the microtubule organizing center. The sequence is that of Dynein light chain Tctex-type 4 (DYNLT4) from Sus scrofa (Pig).